The chain runs to 353 residues: Quinolinate synthase (353 aa).

Residues H47 and S68 each coordinate iminosuccinate. A [4Fe-4S] cluster-binding site is contributed by C113. Iminosuccinate-binding positions include 139 to 141 and S156; that span reads YAN. A [4Fe-4S] cluster-binding site is contributed by C200. Residues 226–228 and T243 each bind iminosuccinate; that span reads HPE. Residue C297 coordinates [4Fe-4S] cluster.

Belongs to the quinolinate synthase family. Type 1 subfamily. [4Fe-4S] cluster serves as cofactor.

The protein localises to the cytoplasm. It carries out the reaction iminosuccinate + dihydroxyacetone phosphate = quinolinate + phosphate + 2 H2O + H(+). It functions in the pathway cofactor biosynthesis; NAD(+) biosynthesis; quinolinate from iminoaspartate: step 1/1. Catalyzes the condensation of iminoaspartate with dihydroxyacetone phosphate to form quinolinate. In Serratia proteamaculans (strain 568), this protein is Quinolinate synthase.